Here is a 609-residue protein sequence, read N- to C-terminus: Threonine--tRNA ligase (609 aa).

Residues 215 to 506 form a catalytic region; that stretch reads DHRIIGNEMK…LIEHTAGELP (292 aa). Positions 307, 358, and 483 each coordinate Zn(2+).

This sequence belongs to the class-II aminoacyl-tRNA synthetase family. Homodimer. The cofactor is Zn(2+).

The protein localises to the cytoplasm. The enzyme catalyses tRNA(Thr) + L-threonine + ATP = L-threonyl-tRNA(Thr) + AMP + diphosphate + H(+). Catalyzes the attachment of threonine to tRNA(Thr) in a two-step reaction: L-threonine is first activated by ATP to form Thr-AMP and then transferred to the acceptor end of tRNA(Thr). Also edits incorrectly charged L-seryl-tRNA(Thr). This chain is Threonine--tRNA ligase, found in Campylobacter hominis (strain ATCC BAA-381 / DSM 21671 / CCUG 45161 / LMG 19568 / NCTC 13146 / CH001A).